We begin with the raw amino-acid sequence, 181 residues long: Isopentenyl-diphosphate Delta-isomerase (181 aa).

Residues H25 and H32 each contribute to the Mn(2+) site. In terms of domain architecture, Nudix hydrolase spans 30–164; the sequence is PLHLAFSCWL…PWAFSPWMVM (135 aa). C67 is an active-site residue. C67 serves as a coordination point for Mg(2+). Residue H69 participates in Mn(2+) binding. Residue E87 coordinates Mg(2+). Mn(2+) contacts are provided by E114 and E116. The active site involves E116.

It belongs to the IPP isomerase type 1 family. As to quaternary structure, homodimer. Mg(2+) is required as a cofactor. The cofactor is Mn(2+).

Its subcellular location is the cytoplasm. The catalysed reaction is isopentenyl diphosphate = dimethylallyl diphosphate. The protein operates within isoprenoid biosynthesis; dimethylallyl diphosphate biosynthesis; dimethylallyl diphosphate from isopentenyl diphosphate: step 1/1. Catalyzes the 1,3-allylic rearrangement of the homoallylic substrate isopentenyl (IPP) to its highly electrophilic allylic isomer, dimethylallyl diphosphate (DMAPP). The chain is Isopentenyl-diphosphate Delta-isomerase from Salmonella choleraesuis (strain SC-B67).